The primary structure comprises 86 residues: RNA-binding protein Hfq (86 aa).

The Sm domain occupies Asp9–Ile68.

It belongs to the Hfq family. As to quaternary structure, homohexamer.

Functionally, RNA chaperone that binds small regulatory RNA (sRNAs) and mRNAs to facilitate mRNA translational regulation in response to envelope stress, environmental stress and changes in metabolite concentrations. Also binds with high specificity to tRNAs. In Pseudomonas savastanoi pv. phaseolicola (strain 1448A / Race 6) (Pseudomonas syringae pv. phaseolicola (strain 1448A / Race 6)), this protein is RNA-binding protein Hfq.